An 847-amino-acid chain; its full sequence is Alanine--tRNA ligase (847 aa).

The Zn(2+) site is built by histidine 554, histidine 558, cysteine 656, and histidine 660.

Belongs to the class-II aminoacyl-tRNA synthetase family. The cofactor is Zn(2+).

It is found in the cytoplasm. It catalyses the reaction tRNA(Ala) + L-alanine + ATP = L-alanyl-tRNA(Ala) + AMP + diphosphate. Its function is as follows. Catalyzes the attachment of alanine to tRNA(Ala) in a two-step reaction: alanine is first activated by ATP to form Ala-AMP and then transferred to the acceptor end of tRNA(Ala). Also edits incorrectly charged Ser-tRNA(Ala) and Gly-tRNA(Ala) via its editing domain. This chain is Alanine--tRNA ligase, found in Helicobacter acinonychis (strain Sheeba).